The chain runs to 127 residues: Large ribosomal subunit protein bL17 (127 aa).

The protein belongs to the bacterial ribosomal protein bL17 family. Part of the 50S ribosomal subunit. Contacts protein L32.

The protein is Large ribosomal subunit protein bL17 of Stenotrophomonas maltophilia (strain R551-3).